We begin with the raw amino-acid sequence, 271 residues long: Phosphonoacetaldehyde hydrolase (271 aa).

Catalysis depends on aspartate 12, which acts as the Nucleophile. Residues aspartate 12 and alanine 14 each coordinate Mg(2+). The Schiff-base intermediate with substrate role is filled by lysine 54. Residue aspartate 188 coordinates Mg(2+).

The protein belongs to the HAD-like hydrolase superfamily. PhnX family. Homodimer. It depends on Mg(2+) as a cofactor.

It catalyses the reaction phosphonoacetaldehyde + H2O = acetaldehyde + phosphate + H(+). Functionally, involved in phosphonate degradation. This chain is Phosphonoacetaldehyde hydrolase, found in Aliivibrio salmonicida (strain LFI1238) (Vibrio salmonicida (strain LFI1238)).